The chain runs to 245 residues: CTD nuclear envelope phosphatase 1B (245 aa).

A helical transmembrane segment spans residues 7 to 29; it reads CLLGVRTFHGVTSRIWSFFLYIL. The FCP1 homology domain occupies 58-225; that stretch reads NNVKRKILVL…LNLLPMLDAL (168 aa).

This sequence belongs to the dullard family.

The protein localises to the endoplasmic reticulum membrane. It localises to the nucleus membrane. It catalyses the reaction O-phospho-L-seryl-[protein] + H2O = L-seryl-[protein] + phosphate. The catalysed reaction is O-phospho-L-threonyl-[protein] + H2O = L-threonyl-[protein] + phosphate. Its function is as follows. Serine/threonine protein phosphatase that may dephosphorylate and activate lipins. Lipins are phosphatidate phosphatases that catalyze the conversion of phosphatidic acid to diacylglycerol and control the metabolism of fatty acids at different levels. May indirectly modulate the lipid composition of nuclear and/or endoplasmic reticulum membranes and be required for proper nuclear membrane morphology and/or dynamics. May also indirectly regulate the production of lipid droplets and triacylglycerol. May antagonize BMP signaling. This is CTD nuclear envelope phosphatase 1B (ctdnep1b) from Danio rerio (Zebrafish).